Here is an 802-residue protein sequence, read N- to C-terminus: Ribosomal protein S6 kinase alpha-5 (802 aa).

The span at 1–22 (MEEEGGSSGGAAGTSADGGDGG) shows a compositional bias: gly residues. The disordered stretch occupies residues 1–23 (MEEEGGSSGGAAGTSADGGDGGE). One can recognise a Protein kinase 1 domain in the interval 49 to 318 (FELLKVLGTG…ADEIKEHLFF (270 aa)). Residues 55–63 (LGTGAYGKV) and Lys-81 contribute to the ATP site. Asp-177 serves as the catalytic Proton acceptor. The residue at position 212 (Ser-212) is a Phosphoserine; by autocatalysis. The 69-residue stretch at 319–387 (QKINWDDLAA…VAPSILFKRN (69 aa)) folds into the AGC-kinase C-terminal domain. Position 360 is a phosphoserine; by MAPK1, MAPK3 and MAPK14 (Ser-360). 2 positions are modified to phosphoserine; by autocatalysis: Ser-376 and Ser-381. The 262-residue stretch at 426 to 687 (DLKDKPLGEG…MSGLRYNEWL (262 aa)) folds into the Protein kinase 2 domain. Residues 432 to 440 (LGEGSFSIC) and Lys-455 each bind ATP. The Proton acceptor role is filled by Asp-544. Thr-581 is modified (phosphothreonine; by MAPK1, MAPK3 and MAPK14). 4 positions are modified to phosphoserine: Ser-647, Ser-657, Ser-691, and Ser-695. A Phosphothreonine; by MAPK1, MAPK3 and MAPK14 modification is found at Thr-700. The disordered stretch occupies residues 741–802 (AKRRKMKKTS…TLFQFSDSVA (62 aa)). Residues 749–779 (TSTSTETRSSSSESSHSSSSHSHGKTTPTKT) show a composition bias toward low complexity. Ser-750, Ser-752, and Ser-758 each carry phosphoserine; by autocatalysis. The span at 780 to 802 (LQPSNPADSNNPETLFQFSDSVA) shows a compositional bias: polar residues. Residue Ser-798 is modified to Phosphoserine.

The protein belongs to the protein kinase superfamily. AGC Ser/Thr protein kinase family. S6 kinase subfamily. In terms of assembly, forms a complex with either MAPK1/ERK2 or MAPK3/ERK1 in quiescent cells which transiently dissociates following mitogenic stimulation. Also associates with MAPK14/p38-alpha. Activated RPS6KA5 associates with and phosphorylates the NF-kappa-B p65 subunit RELA. Interacts with CREBBP and EP300. It depends on Mg(2+) as a cofactor. In terms of processing, ser-376 and Thr-581 phosphorylation is required for kinase activity. Ser-376 and Ser-212 are autophosphorylated by the C-terminal kinase domain, and their phosphorylation is essential for the catalytic activity of the N-terminal kinase domain. Phosphorylated at Ser-360, Thr-581 and Thr-700 by MAPK1/ERK2, MAPK3/ERK1 and MAPK14/p38-alpha. Autophosphorylated at Ser-750, Ser-752 and Ser-758 by the N-terminal kinase domain. Post-translationally, ubiquitinated. Widely expressed with high levels in heart, brain and placenta. Less abundant in lung, kidney and liver.

It localises to the nucleus. The protein localises to the cytoplasm. The enzyme catalyses L-seryl-[protein] + ATP = O-phospho-L-seryl-[protein] + ADP + H(+). The catalysed reaction is L-threonyl-[protein] + ATP = O-phospho-L-threonyl-[protein] + ADP + H(+). With respect to regulation, activated by phosphorylation at Ser-360, Thr-581 and Thr-700 by MAPK1/ERK2, MAPK3/ERK1 and MAPK14/p38-alpha, and by further autophosphorylation of Ser-212, Ser-376 and Ser-381 by the activated C-terminal kinase domain. The active N-terminal kinase domain finally phosphorylates downstream substrates, as well as Ser-750, Ser-752 and Ser-758 in its own C-terminal region. Functionally, serine/threonine-protein kinase that is required for the mitogen or stress-induced phosphorylation of the transcription factors CREB1 and ATF1 and for the regulation of the transcription factors RELA, STAT3 and ETV1/ER81, and that contributes to gene activation by histone phosphorylation and functions in the regulation of inflammatory genes. Phosphorylates CREB1 and ATF1 in response to mitogenic or stress stimuli such as UV-C irradiation, epidermal growth factor (EGF) and anisomycin. Plays an essential role in the control of RELA transcriptional activity in response to TNF and upon glucocorticoid, associates in the cytoplasm with the glucocorticoid receptor NR3C1 and contributes to RELA inhibition and repression of inflammatory gene expression. In skeletal myoblasts is required for phosphorylation of RELA at 'Ser-276' during oxidative stress. In erythropoietin-stimulated cells, is necessary for the 'Ser-727' phosphorylation of STAT3 and regulation of its transcriptional potential. Phosphorylates ETV1/ER81 at 'Ser-191' and 'Ser-216', and thereby regulates its ability to stimulate transcription, which may be important during development and breast tumor formation. Directly represses transcription via phosphorylation of 'Ser-1' of histone H2A. Phosphorylates 'Ser-10' of histone H3 in response to mitogenics, stress stimuli and EGF, which results in the transcriptional activation of several immediate early genes, including proto-oncogenes c-fos/FOS and c-jun/JUN. May also phosphorylate 'Ser-28' of histone H3. Mediates the mitogen- and stress-induced phosphorylation of high mobility group protein 1 (HMGN1/HMG14). In lipopolysaccharide-stimulated primary macrophages, acts downstream of the Toll-like receptor TLR4 to limit the production of pro-inflammatory cytokines. Functions probably by inducing transcription of the MAP kinase phosphatase DUSP1 and the anti-inflammatory cytokine interleukin 10 (IL10), via CREB1 and ATF1 transcription factors. Plays a role in neuronal cell death by mediating the downstream effects of excitotoxic injury. Phosphorylates TRIM7 at 'Ser-107' in response to growth factor signaling via the MEK/ERK pathway, thereby stimulating its ubiquitin ligase activity. This is Ribosomal protein S6 kinase alpha-5 (RPS6KA5) from Homo sapiens (Human).